A 204-amino-acid chain; its full sequence is Casparian strip membrane protein 3 (204 aa).

The Cytoplasmic portion of the chain corresponds to 1–41; it reads MKNESTFIDVPADSSSAMKGKAPLIGVAKDHTASGSGGYNR. The chain crosses the membrane as a helical span at residues 42 to 62; that stretch reads GLSIFDFLLRLAAIVAASVAA. Residues 63-92 lie on the Extracellular side of the membrane; that stretch reads GTMFTSDETLPFFTQFLQFQAGYDDLPTFQ. A helical transmembrane segment spans residues 93–113; sequence FFVISMSLVSGYIVLSLPISV. Residues 114-125 lie on the Cytoplasmic side of the membrane; sequence VTIVRPLAAAPR. A helical transmembrane segment spans residues 126–146; sequence LLLLVLDTAVMGLTMAAASSA. The Extracellular portion of the chain corresponds to 147 to 204; that stretch reads AAISYVAHNGNQNTNWLPICQQFGDFCQKTSGGCGLFLCRRRVFHDPGCPLRSRSQRH.

The protein belongs to the Casparian strip membrane proteins (CASP) family. In terms of assembly, homodimer and heterodimers.

It is found in the cell membrane. In terms of biological role, regulates membrane-cell wall junctions and localized cell wall deposition. Required for establishment of the Casparian strip membrane domain (CSD) and the subsequent formation of Casparian strips, a cell wall modification of the root endodermis that determines an apoplastic barrier between the intraorganismal apoplasm and the extraorganismal apoplasm and prevents lateral diffusion. This chain is Casparian strip membrane protein 3, found in Raphanus sativus (Radish).